Consider the following 342-residue polypeptide: Cell division protein FtsQ (342 aa).

Residues 1-80 lie on the Cytoplasmic side of the membrane; sequence MDGAGSLTRS…ALVERYLPRR (80 aa). Residues 81–99 form a helical membrane-spanning segment; it reads VGISMTVLLLIGSCGFGIV. The Periplasmic portion of the chain corresponds to 100–342; it reads KGGHLQDFVT…KKKKKAGDAA (243 aa). The 69-residue stretch at 124–192 folds into the POTRA domain; it reads FRITSVVING…GQLMIELTER (69 aa).

It belongs to the FtsQ/DivIB family. FtsQ subfamily.

The protein localises to the cell inner membrane. Essential cell division protein. The protein is Cell division protein FtsQ of Bradyrhizobium diazoefficiens (strain JCM 10833 / BCRC 13528 / IAM 13628 / NBRC 14792 / USDA 110).